Consider the following 534-residue polypeptide: Light-independent protochlorophyllide reductase subunit B (534 aa).

Aspartate 36 is a binding site for [4Fe-4S] cluster. Aspartate 274 functions as the Proton donor in the catalytic mechanism. Position 409–410 (glycine 409–leucine 410) interacts with substrate. The tract at residues aspartate 426–aspartate 446 is disordered.

The protein belongs to the ChlB/BchB/BchZ family. As to quaternary structure, protochlorophyllide reductase is composed of three subunits; BchL, BchN and BchB. Forms a heterotetramer of two BchB and two BchN subunits. [4Fe-4S] cluster is required as a cofactor.

It carries out the reaction chlorophyllide a + oxidized 2[4Fe-4S]-[ferredoxin] + 2 ADP + 2 phosphate = protochlorophyllide a + reduced 2[4Fe-4S]-[ferredoxin] + 2 ATP + 2 H2O. Its pathway is porphyrin-containing compound metabolism; bacteriochlorophyll biosynthesis (light-independent). Functionally, component of the dark-operative protochlorophyllide reductase (DPOR) that uses Mg-ATP and reduced ferredoxin to reduce ring D of protochlorophyllide (Pchlide) to form chlorophyllide a (Chlide). This reaction is light-independent. The NB-protein (BchN-BchB) is the catalytic component of the complex. This chain is Light-independent protochlorophyllide reductase subunit B, found in Cereibacter sphaeroides (strain ATCC 17029 / ATH 2.4.9) (Rhodobacter sphaeroides).